Consider the following 1199-residue polypeptide: DNA-directed RNA polymerase subunit beta' (1199 aa).

4 residues coordinate Zn(2+): C60, C62, C75, and C78. Residues D449, D451, and D453 each coordinate Mg(2+). Zn(2+)-binding residues include C818, C892, C899, and C902.

Belongs to the RNA polymerase beta' chain family. The RNAP catalytic core consists of 2 alpha, 1 beta, 1 beta' and 1 omega subunit. When a sigma factor is associated with the core the holoenzyme is formed, which can initiate transcription. Mg(2+) is required as a cofactor. Requires Zn(2+) as cofactor.

The catalysed reaction is RNA(n) + a ribonucleoside 5'-triphosphate = RNA(n+1) + diphosphate. Functionally, DNA-dependent RNA polymerase catalyzes the transcription of DNA into RNA using the four ribonucleoside triphosphates as substrates. The sequence is that of DNA-directed RNA polymerase subunit beta' from Geobacillus kaustophilus (strain HTA426).